The chain runs to 579 residues: MVFRNVGRPPEEEDAEAAREPGPSELLCPRHRCALDPKALPPGLALERTWGPVAGLEAQLAALGLGQPAGPGIKTAGGGCCPCPCPPQPPPPQPPPPAAAPQAGEDPTETSDALLVLEGLESEAESLETNSCSEEELSSPGRGGGGVGGRLLLQPPGPELPPVPFPLQDLVPPGRLSRGEQQQQQPPPPPPPPGPLRPLAGPSRKGSFKIRLSRLFRTKSCNGGSGGGDGTGKRPSGDLAASAASLTDMGGSAVRELDTGRKPRLTRTQSAFSPVSFSPLFTGETVSLVDVDISQRGLTSPHPPTPPPPPRRSLSLLDDISGTLPTSVLVAPMGSSLQSFPLPPPPPPHAPDAFPRIAPIRASESLHSQPPQHLQCPLYRPDSSSFAASLRELEKCGWYWGPMNWEDAEMKLKGKPDGSFLVRDSSDPRYILSLSFRSQGITHHTRMEHYRGTFSLWCHPKFEDRCQSVVEFIKRAIMHSKNGKFLYFLRSRVPGLPPTPVQLLYPVSRFSNVKSLQHLCRFRIRQLVRIDHIPDLPLPKPLISYIRKFYYYDPQEEVYLSLKEAQLISKQKQEVEPST.

3 disordered regions span residues 1–25 (MVFR…GPSE), 89–270 (PPPP…RTQS), and 295–315 (QRGL…RSLS). 3 stretches are compositionally biased toward pro residues: residues 89–99 (PPPPQPPPPAA), 155–165 (PPGPELPPVPF), and 185–196 (QPPPPPPPPGPL). The tract at residues 124–492 (AESLETNSCS…GKFLYFLRSR (369 aa)) is mediates interaction with SORBS3. Basic residues predominate over residues 206-217 (GSFKIRLSRLFR). Residues 301-311 (PHPPTPPPPPR) show a composition bias toward pro residues. In terms of domain architecture, SH2 spans 398 to 507 (WYWGPMNWED…PTPVQLLYPV (110 aa)). Positions 502–552 (QLLYPVSRFSNVKSLQHLCRFRIRQLVRIDHIPDLPLPKPLISYIRKFYYY) constitute an SOCS box domain.

As to quaternary structure, substrate-recognition component of the ECS(SOCS7) complex, composed of SOCS7, CUL5, ELOB, ELOC and RNF7/RBX2. Interacts, via the third proline-rich region, with the second SH3 domain of the adapter protein NCK1. Also interacts with GRB2, INSR, PLCG1, SORBS3/vinexin, and phosphorylated STAT3 and STAT5. Interacts with SEPT6. Interacts with phosphorylated IRS4 and PIK3R1. Widely expressed with higher expression in brain and testis where it is expressed by spermatocytes and early spermatids. Also significantly expressed in spleen, skeletal muscle and kidney.

Its subcellular location is the cytoplasm. It localises to the nucleus. The protein localises to the cell membrane. It participates in protein modification; protein ubiquitination. Functionally, substrate-recognition component of a cullin-5-RING E3 ubiquitin-protein ligase complex (ECS complex, also named CRL5 complex), which mediates the ubiquitination and subsequent proteasomal degradation of target proteins, such as DAB1 and IRS1. Specifically recognizes and binds phosphorylated proteins via its SH2 domain, promoting their ubiquitination. The ECS(SOCS7) complex acts as a key regulator of reelin signaling by mediating ubiquitination and degradation of phosphorylated DAB1 in the cortical plate of the developing cerebral cortex, thereby regulating neuron positioning during cortex development. Functions in insulin signaling and glucose homeostasis through IRS1 ubiquitination and subsequent proteasomal degradation. Also inhibits prolactin, growth hormone and leptin signaling by preventing STAT3 and STAT5 activation, sequestering them in the cytoplasm and reducing their binding to DNA. The protein is Suppressor of cytokine signaling 7 of Mus musculus (Mouse).